A 450-amino-acid polypeptide reads, in one-letter code: Keratin, type I cytoskeletal 25 (450 aa).

Positions 1-24 (MSLRLPSGSRRAGPRPTTGSLRLS) are disordered. The interval 1 to 78 (MSLRLPSGSR…MNEGGLLSGN (78 aa)) is head. The tract at residues 79–114 (EKVTMQNLNDRLASYLENVRALEEANADLEQKIKGW) is coil 1A. The IF rod domain occupies 79 to 394 (EKVTMQNLND…LLIGGDDGAC (316 aa)). The tract at residues 115-136 (YEKFGPGSCRGLDHDYSRYLPI) is linker 1. The interval 137–228 (IEDLKNQIIA…KNHKEEMQVL (92 aa)) is coil 1B. The tract at residues 229-251 (QCAAGGNVNVEMNAAPGVDLTVL) is linker 12. The segment at 252 to 390 (LNNMRAEYEA…ETYCLLIGGD (139 aa)) is coil 2. The interval 391-450 (DGACKSGGYKSKDYAAGNMGNQMKDPIRAIVVKKVLEEVDQRSKVLTTRLHSLEEKSQSN) is tail. The residue at position 442 (serine 442) is a Phosphoserine.

This sequence belongs to the intermediate filament family. As to quaternary structure, heterodimer of a type I and a type II keratin. Heterodimer with type II keratin KRT5 leading to the formation of keratin intermediate filament (KIF) network. Interacts with KRT6A to form filaments. As to expression, expressed in skin and wool follicle. Expression localized to the inner root sheath of wool follicle.

The protein localises to the cytoplasm. Essential for the proper assembly of type I and type II keratin protein complexes and formation of keratin intermediate filaments in the inner root sheath (irs). Plays a role in the cytoskeleton organization. This is Keratin, type I cytoskeletal 25 from Ovis aries (Sheep).